The sequence spans 271 residues: Aquaporin-2 (271 aa).

At 1–11 the chain is on the cytoplasmic side; that stretch reads MWELRSIAFSR. Residues 12-32 traverse the membrane as a helical segment; it reads AVLAEFLATLLFVFFGLGSAL. Residues 33–40 are Extracellular-facing; the sequence is NWPQALPS. Residues 41 to 59 traverse the membrane as a helical segment; sequence VLQIAMAFGLAIGTLVQAL. The Cytoplasmic segment spans residues 60–64; that stretch reads GHVSG. The discontinuously helical intramembrane region spans 65–74; that stretch reads AHINPAVTVA. Residues 68–70 carry the NPA 1 motif; the sequence is NPA. Residues 75 to 85 lie on the Cytoplasmic side of the membrane; it reads CLVGCHVSFLR. The chain crosses the membrane as a helical span at residues 86–107; that stretch reads AVFYVAAQLLGAVAGAALLHEI. Over 108–127 the chain is Extracellular; the sequence is TPPAIRGDLAVNALNNNSTA. Asparagine 123 is a glycosylation site (N-linked (GlcNAc...) asparagine). A helical transmembrane segment spans residues 128-148; sequence GQAVTVELFLTLQLVLCIFAS. Residues 149-156 are Cytoplasmic-facing; sequence TDERRGDN. A helical membrane pass occupies residues 157–176; it reads VGTPALSIGFSVALGHLLGI. Residues 177–180 lie on the Extracellular side of the membrane; that stretch reads HYTG. An intramembrane region (discontinuously helical) is located at residues 181 to 193; the sequence is CSMNPARSLAPAI. Positions 184–186 match the NPA 2 motif; sequence NPA. Residues 194 to 201 are Extracellular-facing; it reads VTGKFDDH. A helical membrane pass occupies residues 202–222; sequence WVFWIGPLVGAIVASLLYNYV. Residues 223 to 271 lie on the Cytoplasmic side of the membrane; sequence LFPPAKSLSERLAVLKGLEPDTDWEEREVRRRQSVELHSPQSLPRGSKA. The interval 251–271 is disordered; sequence VRRRQSVELHSPQSLPRGSKA. Serine 256 carries the phosphoserine modification. Residues 261-271 show a composition bias toward polar residues; it reads SPQSLPRGSKA.

This sequence belongs to the MIP/aquaporin (TC 1.A.8) family. As to quaternary structure, homotetramer. In terms of processing, ser-256 phosphorylation is necessary and sufficient for expression at the apical membrane. Endocytosis is not phosphorylation-dependent. Post-translationally, N-glycosylated.

The protein resides in the apical cell membrane. Its subcellular location is the basolateral cell membrane. The protein localises to the cell membrane. It localises to the cytoplasmic vesicle membrane. It is found in the golgi apparatus. The protein resides in the trans-Golgi network membrane. It carries out the reaction H2O(in) = H2O(out). It catalyses the reaction glycerol(in) = glycerol(out). In terms of biological role, forms a water-specific channel that provides the plasma membranes of renal collecting duct with high permeability to water, thereby permitting water to move in the direction of an osmotic gradient. Could also be permeable to glycerol. The sequence is that of Aquaporin-2 from Bos taurus (Bovine).